The sequence spans 86 residues: Large ribosomal subunit protein bL27 (86 aa).

Positions 1-10 (MAQKKGGGST) are enriched in gly residues. Residues 1 to 21 (MAQKKGGGSTRNGRDSESKRL) form a disordered region.

It belongs to the bacterial ribosomal protein bL27 family.

The protein is Large ribosomal subunit protein bL27 of Cupriavidus taiwanensis (strain DSM 17343 / BCRC 17206 / CCUG 44338 / CIP 107171 / LMG 19424 / R1) (Ralstonia taiwanensis (strain LMG 19424)).